A 201-amino-acid chain; its full sequence is Small ribosomal subunit protein uS4 (201 aa).

One can recognise an S4 RNA-binding domain in the interval 93–153; sequence QRLDNIVYRL…EKSKNLVIIK (61 aa).

It belongs to the universal ribosomal protein uS4 family. In terms of assembly, part of the 30S ribosomal subunit. Contacts protein S5. The interaction surface between S4 and S5 is involved in control of translational fidelity.

Its function is as follows. One of the primary rRNA binding proteins, it binds directly to 16S rRNA where it nucleates assembly of the body of the 30S subunit. Functionally, with S5 and S12 plays an important role in translational accuracy. The protein is Small ribosomal subunit protein uS4 of Latilactobacillus sakei subsp. sakei (strain 23K) (Lactobacillus sakei subsp. sakei).